The primary structure comprises 396 residues: Elongation factor Tu 2 (396 aa).

One can recognise a tr-type G domain in the interval 10-206 (KPHVNVGTIG…ALDTYIPTPK (197 aa)). Residues 19-26 (GHVDHGKT) form a G1 region. GTP is bound at residue 19–26 (GHVDHGKT). Residue Thr-26 coordinates Mg(2+). Positions 60-64 (GITIS) are G2. The G3 stretch occupies residues 81 to 84 (DCPG). GTP is bound by residues 81–85 (DCPGH) and 136–139 (NKAD). The interval 136–139 (NKAD) is G4. A G5 region spans residues 174-176 (SAL).

The protein belongs to the TRAFAC class translation factor GTPase superfamily. Classic translation factor GTPase family. EF-Tu/EF-1A subfamily. In terms of assembly, monomer.

The protein localises to the cytoplasm. It catalyses the reaction GTP + H2O = GDP + phosphate + H(+). Its function is as follows. GTP hydrolase that promotes the GTP-dependent binding of aminoacyl-tRNA to the A-site of ribosomes during protein biosynthesis. The chain is Elongation factor Tu 2 from Ruthia magnifica subsp. Calyptogena magnifica.